We begin with the raw amino-acid sequence, 273 residues long: Dermonecrotic toxin LdSicTox-alphaIB1av (273 aa).

His-5 is a catalytic residue. Glu-25 and Asp-27 together coordinate Mg(2+). His-41 acts as the Nucleophile in catalysis. 2 cysteine pairs are disulfide-bonded: Cys-45-Cys-51 and Cys-47-Cys-190. Asp-85 lines the Mg(2+) pocket. Asn-250 carries N-linked (GlcNAc...) asparagine glycosylation.

This sequence belongs to the arthropod phospholipase D family. Class II subfamily. Mg(2+) is required as a cofactor. As to expression, expressed by the venom gland.

The protein resides in the secreted. It carries out the reaction an N-(acyl)-sphingosylphosphocholine = an N-(acyl)-sphingosyl-1,3-cyclic phosphate + choline. The catalysed reaction is an N-(acyl)-sphingosylphosphoethanolamine = an N-(acyl)-sphingosyl-1,3-cyclic phosphate + ethanolamine. The enzyme catalyses a 1-acyl-sn-glycero-3-phosphocholine = a 1-acyl-sn-glycero-2,3-cyclic phosphate + choline. It catalyses the reaction a 1-acyl-sn-glycero-3-phosphoethanolamine = a 1-acyl-sn-glycero-2,3-cyclic phosphate + ethanolamine. Its function is as follows. Dermonecrotic toxins cleave the phosphodiester linkage between the phosphate and headgroup of certain phospholipids (sphingolipid and lysolipid substrates), forming an alcohol (often choline) and a cyclic phosphate. This toxin acts on sphingomyelin (SM). It may also act on ceramide phosphoethanolamine (CPE), lysophosphatidylcholine (LPC) and lysophosphatidylethanolamine (LPE), but not on lysophosphatidylserine (LPS), and lysophosphatidylglycerol (LPG). It acts by transphosphatidylation, releasing exclusively cyclic phosphate products as second products. Induces dermonecrosis, hemolysis, increased vascular permeability, edema, inflammatory response, and platelet aggregation. The sequence is that of Dermonecrotic toxin LdSicTox-alphaIB1av from Loxosceles deserta (Desert recluse spider).